Here is a 395-residue protein sequence, read N- to C-terminus: ATP synthase subunit beta, chloroplastic (395 aa).

Position 72–79 (72–79 (GGAGVGKT)) interacts with ATP.

It belongs to the ATPase alpha/beta chains family. In terms of assembly, F-type ATPases have 2 components, CF(1) - the catalytic core - and CF(0) - the membrane proton channel. CF(1) has five subunits: alpha(3), beta(3), gamma(1), delta(1), epsilon(1). CF(0) has four main subunits: a(1), b(1), b'(1) and c(9-12).

It is found in the plastid. It localises to the chloroplast thylakoid membrane. It catalyses the reaction ATP + H2O + 4 H(+)(in) = ADP + phosphate + 5 H(+)(out). In terms of biological role, produces ATP from ADP in the presence of a proton gradient across the membrane. The catalytic sites are hosted primarily by the beta subunits. The chain is ATP synthase subunit beta, chloroplastic from Blechnum occidentale (Hammock fern).